Here is a 498-residue protein sequence, read N- to C-terminus: Membrane-bound lytic murein transglycosylase F (498 aa).

An N-terminal signal peptide occupies residues 1–29 (MFFKPDFRPRCAKWLIATGLFLMLGACVE). The segment at 30–267 (KPTTLERVKE…RLKDRYYGHV (238 aa)) is non-LT domain. Residues 268–498 (DVLGYVGAYT…SSSSTDESPL (231 aa)) form an LT domain region. Residue glutamate 314 is part of the active site. A disordered region spans residues 464 to 498 (VADGNLHVPGVDKTQPPVPPASPVPSSSSTDESPL).

The protein in the N-terminal section; belongs to the bacterial solute-binding protein 3 family. It in the C-terminal section; belongs to the transglycosylase Slt family.

It is found in the cell outer membrane. The enzyme catalyses Exolytic cleavage of the (1-&gt;4)-beta-glycosidic linkage between N-acetylmuramic acid (MurNAc) and N-acetylglucosamine (GlcNAc) residues in peptidoglycan, from either the reducing or the non-reducing ends of the peptidoglycan chains, with concomitant formation of a 1,6-anhydrobond in the MurNAc residue.. Murein-degrading enzyme that degrades murein glycan strands and insoluble, high-molecular weight murein sacculi, with the concomitant formation of a 1,6-anhydromuramoyl product. Lytic transglycosylases (LTs) play an integral role in the metabolism of the peptidoglycan (PG) sacculus. Their lytic action creates space within the PG sacculus to allow for its expansion as well as for the insertion of various structures such as secretion systems and flagella. This chain is Membrane-bound lytic murein transglycosylase F, found in Pseudomonas syringae pv. syringae (strain B728a).